A 181-amino-acid chain; its full sequence is Resolvase/recombinase (181 aa).

The Resolvase/invertase-type recombinase catalytic domain occupies 2–137 (RLFGYARVST…EGRLEAKAKG (136 aa)). Ser-10 acts as the O-(5'-phospho-DNA)-serine intermediate in catalysis. Residues 161 to 180 (AMEIAKRLKIGRSTVYKVLA) constitute a DNA-binding region (H-T-H motif).

This sequence belongs to the site-specific recombinase resolvase family.

In terms of biological role, site-specific recombination protein. The sequence is that of Resolvase/recombinase from Pseudomonas putida (Arthrobacter siderocapsulatus).